A 356-amino-acid chain; its full sequence is Putative methylthioribose-1-phosphate isomerase (356 aa).

Residues Arg57–Ala59, Arg100, and Gln206 contribute to the substrate site. Residue Asp247 is the Proton donor of the active site. Asn257–Lys258 lines the substrate pocket.

Belongs to the eIF-2B alpha/beta/delta subunits family. MtnA subfamily.

The catalysed reaction is 5-(methylsulfanyl)-alpha-D-ribose 1-phosphate = 5-(methylsulfanyl)-D-ribulose 1-phosphate. Functionally, catalyzes the interconversion of methylthioribose-1-phosphate (MTR-1-P) into methylthioribulose-1-phosphate (MTRu-1-P). The protein is Putative methylthioribose-1-phosphate isomerase of Pyrococcus furiosus (strain ATCC 43587 / DSM 3638 / JCM 8422 / Vc1).